Here is a 338-residue protein sequence, read N- to C-terminus: 1-aminocyclopropane-1-carboxylate deaminase (338 aa).

Lys-51 is modified (N6-(pyridoxal phosphate)lysine). The Nucleophile role is filled by Ser-78.

It belongs to the ACC deaminase/D-cysteine desulfhydrase family. Homotrimer. The cofactor is pyridoxal 5'-phosphate.

The catalysed reaction is 1-aminocyclopropane-1-carboxylate + H2O = 2-oxobutanoate + NH4(+). Catalyzes a cyclopropane ring-opening reaction, the irreversible conversion of 1-aminocyclopropane-1-carboxylate (ACC) to ammonia and alpha-ketobutyrate. Allows growth on ACC as a nitrogen source. The polypeptide is 1-aminocyclopropane-1-carboxylate deaminase (Burkholderia ambifaria (strain MC40-6)).